The sequence spans 88 residues: Small ribosomal subunit protein bS16 (88 aa).

It belongs to the bacterial ribosomal protein bS16 family.

This Staphylococcus saprophyticus subsp. saprophyticus (strain ATCC 15305 / DSM 20229 / NCIMB 8711 / NCTC 7292 / S-41) protein is Small ribosomal subunit protein bS16.